The following is a 123-amino-acid chain: Fluoride-specific ion channel FluC (123 aa).

4 helical membrane-spanning segments follow: residues 1–21, 32–52, 66–86, and 99–119; these read MQWLAIGLGAAIGACLRGWLA, LGTLGANVLGGLLIGLALVWF, FVITGFLGGLTTFSTFSVEVF, and GLIGLHVGLTLLATALGFYFF. Positions 73 and 76 each coordinate Na(+).

It belongs to the fluoride channel Fluc/FEX (TC 1.A.43) family.

Its subcellular location is the cell inner membrane. The enzyme catalyses fluoride(in) = fluoride(out). Its activity is regulated as follows. Na(+) is not transported, but it plays an essential structural role and its presence is essential for fluoride channel function. Functionally, fluoride-specific ion channel. Important for reducing fluoride concentration in the cell, thus reducing its toxicity. In Psychrobacter cryohalolentis (strain ATCC BAA-1226 / DSM 17306 / VKM B-2378 / K5), this protein is Fluoride-specific ion channel FluC.